We begin with the raw amino-acid sequence, 226 residues long: uncharacterized protein (226 aa).

The next 4 membrane-spanning stretches (helical) occupy residues 25-45, 54-74, 107-127, and 153-173; these read ALAWLCDVFLLAIVLVVIFLI, FLLFLVLSCSQTILWTVYFIF, ELFLWILLSVLFLVIASYFFI, and TITILISFLQLIFIGYFCFSS.

The protein resides in the cell membrane. This is an uncharacterized protein from Mycoplasma genitalium (strain ATCC 33530 / DSM 19775 / NCTC 10195 / G37) (Mycoplasmoides genitalium).